Consider the following 901-residue polypeptide: Protein translocase subunit SecA (901 aa).

Residues Gln87, 105 to 109 (GEGKT), and Asp512 each bind ATP. The interval 859–901 (HQDDDSAAAAALAAQTGERKVGRNDPCPCGSGKKYKQCHGRLQ) is disordered. Residues Cys885, Cys887, Cys896, and His897 each contribute to the Zn(2+) site. Over residues 891 to 901 (KKYKQCHGRLQ) the composition is skewed to basic residues.

Belongs to the SecA family. Monomer and homodimer. Part of the essential Sec protein translocation apparatus which comprises SecA, SecYEG and auxiliary proteins SecDF-YajC and YidC. Zn(2+) serves as cofactor.

It localises to the cell inner membrane. The protein resides in the cytoplasm. The catalysed reaction is ATP + H2O + cellular proteinSide 1 = ADP + phosphate + cellular proteinSide 2.. Functionally, part of the Sec protein translocase complex. Interacts with the SecYEG preprotein conducting channel. Has a central role in coupling the hydrolysis of ATP to the transfer of proteins into and across the cell membrane, serving both as a receptor for the preprotein-SecB complex and as an ATP-driven molecular motor driving the stepwise translocation of polypeptide chains across the membrane. This is Protein translocase subunit SecA from Shigella dysenteriae serotype 1 (strain Sd197).